The chain runs to 144 residues: Transcription antitermination protein NusB (144 aa).

The protein belongs to the NusB family.

Functionally, involved in transcription antitermination. Required for transcription of ribosomal RNA (rRNA) genes. Binds specifically to the boxA antiterminator sequence of the ribosomal RNA (rrn) operons. In Streptococcus thermophilus (strain CNRZ 1066), this protein is Transcription antitermination protein NusB.